Consider the following 304-residue polypeptide: Protein phosphatase PTC7 homolog (304 aa).

The N-terminal 68 residues, 1-68, are a transit peptide targeting the mitochondrion; that stretch reads MFSVLSYGRL…GDDACFVARH (68 aa). One can recognise a PPM-type phosphatase domain in the interval 69-299; it reads RSADVLGVAD…DDITVLLSIV (231 aa). Residues Asp-78, Gly-79, and Asp-223 each contribute to the Mn(2+) site.

The protein belongs to the PP2C family. In terms of assembly, interacts with FBXL4, BNIP3 and NIX; these interactions are important for ubiquitination and degradation of BNIP3 and NIX. It depends on Mg(2+) as a cofactor. Mn(2+) is required as a cofactor. In terms of tissue distribution, expressed in keratinocytes (at protein level).

It is found in the mitochondrion matrix. The catalysed reaction is O-phospho-L-seryl-[protein] + H2O = L-seryl-[protein] + phosphate. It carries out the reaction O-phospho-L-threonyl-[protein] + H2O = L-threonyl-[protein] + phosphate. Its activity is regulated as follows. Inhibited by sodium orthovanadate. Protein phosphatase that plays an essential role in mitochondrial metabolism and biogenesis. Positively regulates biosynthesis of the ubiquinone, coenzyme Q. Dephosphorylates the ubiquinone biosynthesis protein COQ7 which is likely to lead to its activation. Serves as a crucial sensor for mitophagy, though the underlying mechanism remains ambiguous. May dephosphorylate BNIP3 and NIX and thereby directly regulates mitophagy receptor function and stability. Alternatively, promotes SCF-FBXL4-dependent ubiquitination and degradation of BNIP3 and NIX independently of its catalytic activity to restrain mitophagy. The protein is Protein phosphatase PTC7 homolog (PPTC7) of Homo sapiens (Human).